The sequence spans 357 residues: DNA replication and repair protein RecF (357 aa).

31–38 serves as a coordination point for ATP; sequence GQNGAGKT.

This sequence belongs to the RecF family.

It localises to the cytoplasm. Its function is as follows. The RecF protein is involved in DNA metabolism; it is required for DNA replication and normal SOS inducibility. RecF binds preferentially to single-stranded, linear DNA. It also seems to bind ATP. The chain is DNA replication and repair protein RecF from Coxiella burnetii (strain Dugway 5J108-111).